Reading from the N-terminus, the 472-residue chain is Doublesex- and mab-3-related transcription factor 3 (472 aa).

Residues 29 to 76 (CARCRNHGVLSWLKGHKRYCRFKDCTCEKCILIIERQRVMAAQVALRR) constitute a DNA-binding region (DM). 2 disordered regions span residues 89–128 (DSLR…AELA) and 155–191 (EERL…GCFT). A compositionally biased stretch (pro residues) spans 95 to 123 (PGPPPPGDAVAAPQPPPASQPSQPQPPRP). The segment covering 155–179 (EERLGDGKSADNTEVFSDKDTDQRS) has biased composition (basic and acidic residues). Residues 249-284 (RPPLEVLKKIFPNQKPTVLELILKGCGGDLVSAVEV) enclose the DMA domain. A disordered region spans residues 430 to 472 (TEDPRISIPDDGCPFVSKQSIYTEDDYDERSDSSDSRTLNTSS).

The protein belongs to the DMRT family. In terms of assembly, may homodimerize. Expressed in testis.

Its subcellular location is the nucleus. In terms of biological role, probable transcription factor that plays a role in configuring the spinal circuits controlling stride in vertebrates. Involved in neuronal specification within specific subdivision of spinal cord neurons and in the development of a coordinated locomotor network controlling limb movements. May regulate transcription during sexual development. The sequence is that of Doublesex- and mab-3-related transcription factor 3 (DMRT3) from Homo sapiens (Human).